Here is a 949-residue protein sequence, read N- to C-terminus: Isoleucine--tRNA ligase (949 aa).

Positions 58–68 (PYANGDIHIGH) match the 'HIGH' region motif. Glu-567 is an L-isoleucyl-5'-AMP binding site. Positions 608–612 (KMSKS) match the 'KMSKS' region motif. Lys-611 serves as a coordination point for ATP. 4 residues coordinate Zn(2+): Cys-912, Cys-915, Cys-932, and Cys-935.

Belongs to the class-I aminoacyl-tRNA synthetase family. IleS type 1 subfamily. As to quaternary structure, monomer. It depends on Zn(2+) as a cofactor.

It localises to the cytoplasm. The enzyme catalyses tRNA(Ile) + L-isoleucine + ATP = L-isoleucyl-tRNA(Ile) + AMP + diphosphate. Functionally, catalyzes the attachment of isoleucine to tRNA(Ile). As IleRS can inadvertently accommodate and process structurally similar amino acids such as valine, to avoid such errors it has two additional distinct tRNA(Ile)-dependent editing activities. One activity is designated as 'pretransfer' editing and involves the hydrolysis of activated Val-AMP. The other activity is designated 'posttransfer' editing and involves deacylation of mischarged Val-tRNA(Ile). This chain is Isoleucine--tRNA ligase, found in Vibrio cholerae serotype O1 (strain ATCC 39315 / El Tor Inaba N16961).